We begin with the raw amino-acid sequence, 53 residues long: Mannose/glucose-specific lectin alpha 2 chain (53 aa).

The protein belongs to the leguminous lectin family. As to quaternary structure, tetramer of two alpha and two beta chains.

This Lathyrus ochrus (Cyprus-vetch) protein is Mannose/glucose-specific lectin alpha 2 chain.